The primary structure comprises 22 residues: MVPVPVHHMADELLRNGPDTVI.

This chain is Brain peptide MVPVPVHHMADELLRNGPDTVI, found in Apis mellifera (Honeybee).